A 520-amino-acid polypeptide reads, in one-letter code: Lysine--tRNA ligase (520 aa).

The tract at residues 1 to 21 (MSDHLIPSIPTPAAAPAAAPA) is disordered. A compositionally biased stretch (low complexity) spans 12–21 (PAAAPAAAPA). Mg(2+)-binding residues include Glu-430 and Glu-437.

Belongs to the class-II aminoacyl-tRNA synthetase family. In terms of assembly, homodimer. Requires Mg(2+) as cofactor.

The protein resides in the cytoplasm. It catalyses the reaction tRNA(Lys) + L-lysine + ATP = L-lysyl-tRNA(Lys) + AMP + diphosphate. In Variovorax paradoxus (strain S110), this protein is Lysine--tRNA ligase.